Reading from the N-terminus, the 444-residue chain is Phosphoglucosamine mutase (444 aa).

The Phosphoserine intermediate role is filled by Ser102. The Mg(2+) site is built by Ser102, Asp241, Asp243, and Asp245. Ser102 carries the phosphoserine modification.

The protein belongs to the phosphohexose mutase family. It depends on Mg(2+) as a cofactor. In terms of processing, activated by phosphorylation.

The catalysed reaction is alpha-D-glucosamine 1-phosphate = D-glucosamine 6-phosphate. Its function is as follows. Catalyzes the conversion of glucosamine-6-phosphate to glucosamine-1-phosphate. The sequence is that of Phosphoglucosamine mutase from Acidovorax ebreus (strain TPSY) (Diaphorobacter sp. (strain TPSY)).